A 303-amino-acid polypeptide reads, in one-letter code: GTPase Era (303 aa).

The 170-residue stretch at 7 to 176 folds into the Era-type G domain; the sequence is KSGFVAIIGR…LDNVVSHLDE (170 aa). The G1 stretch occupies residues 15–22; it reads GRPNVGKS. Position 15-22 (15-22) interacts with GTP; the sequence is GRPNVGKS. Positions 41 to 45 are G2; that stretch reads QTTRN. The tract at residues 62-65 is G3; the sequence is DTPG. GTP is bound by residues 62–66 and 125–128; these read DTPGV and NKVD. The G4 stretch occupies residues 125–128; it reads NKVD. The tract at residues 155 to 157 is G5; it reads ISA. Positions 207–284 constitute a KH type-2 domain; it reads TRQEVPHSVA…FLETWVKVEP (78 aa).

This sequence belongs to the TRAFAC class TrmE-Era-EngA-EngB-Septin-like GTPase superfamily. Era GTPase family. In terms of assembly, monomer.

The protein localises to the cytoplasm. The protein resides in the cell membrane. An essential GTPase that binds both GDP and GTP, with rapid nucleotide exchange. Plays a role in 16S rRNA processing and 30S ribosomal subunit biogenesis and possibly also in cell cycle regulation and energy metabolism. The sequence is that of GTPase Era from Leuconostoc citreum (strain KM20).